The chain runs to 197 residues: Adenylyl-sulfate kinase (197 aa).

33 to 40 (GLSGSGKS) contacts ATP. The active-site Phosphoserine intermediate is Ser107.

It belongs to the APS kinase family.

The enzyme catalyses adenosine 5'-phosphosulfate + ATP = 3'-phosphoadenylyl sulfate + ADP + H(+). It participates in sulfur metabolism; hydrogen sulfide biosynthesis; sulfite from sulfate: step 2/3. Catalyzes the synthesis of activated sulfate. This chain is Adenylyl-sulfate kinase, found in Bacillus velezensis (strain DSM 23117 / BGSC 10A6 / LMG 26770 / FZB42) (Bacillus amyloliquefaciens subsp. plantarum).